Here is a 248-residue protein sequence, read N- to C-terminus: 14-3-3 protein sigma (248 aa).

Phosphoserine is present on residues Ser-5, Ser-74, and Ser-248.

It belongs to the 14-3-3 family. In terms of assembly, homodimer. Interacts with KRT17 and SAMSN1. Found in a complex with XPO7, EIF4A1, ARHGAP1, VPS26A, VPS29 and VPS35. Interacts with GAB2. Interacts with SRPK2. Interacts with COPS6. Interacts with COP1; this interaction leads to proteasomal degradation. Interacts with the 'Thr-369' phosphorylated form of DAPK2. Interacts with PI4KB. Interacts with SLITRK1. Interacts with LRRK2; this interaction is dependent on LRRK2 phosphorylation. Interacts with PKP3 (via N-terminus); the interaction maintains the cytoplasmic pool of PKP3, facilitates PKP3 exchange at desmosomes and restricts PKP3 localization to existing desmosome cell junctions. Interacts with LCP2. In terms of processing, ubiquitinated. Ubiquitination by RFFL induces proteasomal degradation and indirectly regulates p53/TP53 activation.

It is found in the cytoplasm. It localises to the nucleus. The protein localises to the secreted. Adapter protein implicated in the regulation of a large spectrum of both general and specialized signaling pathways. Binds to a large number of partners, usually by recognition of a phosphoserine or phosphothreonine motif. Binding generally results in the modulation of the activity of the binding partner. Promotes cytosolic retention of GBP1 GTPase by binding to phosphorylated GBP1, thereby inhibiting the innate immune response. Also acts as a TP53/p53-regulated inhibitor of G2/M progression. When bound to KRT17, regulates protein synthesis and epithelial cell growth by stimulating Akt/mTOR pathway. Acts to maintain desmosome cell junction adhesion in epithelial cells via interacting with and sequestering PKP3 to the cytoplasm, thereby restricting its translocation to existing desmosome structures and therefore maintaining desmosome protein homeostasis. Also acts to facilitate PKP3 exchange at desmosome plaques, thereby maintaining keratinocyte intercellular adhesion. May also regulate MDM2 autoubiquitination and degradation and thereby activate p53/TP53. The protein is 14-3-3 protein sigma (SFN) of Bos taurus (Bovine).